We begin with the raw amino-acid sequence, 687 residues long: Auxin response factor 14 (687 aa).

The segment at residues 133-235 (FCKTLTASDT…QLRLGVRRAV (103 aa)) is a DNA-binding region (TF-B3).

This sequence belongs to the ARF family. As to quaternary structure, homo and heterodimers. As to expression, expressed in roots, culms, leaves and young panicles.

Its subcellular location is the nucleus. In terms of biological role, auxin response factors (ARFs) are transcriptional factors that bind specifically to the DNA sequence 5'-TGTCTC-3' found in the auxin-responsive promoter elements (AuxREs). This Oryza sativa subsp. japonica (Rice) protein is Auxin response factor 14 (ARF14).